A 201-amino-acid polypeptide reads, in one-letter code: 3-isopropylmalate dehydratase small subunit (201 aa).

Belongs to the LeuD family. LeuD type 1 subfamily. Heterodimer of LeuC and LeuD.

It catalyses the reaction (2R,3S)-3-isopropylmalate = (2S)-2-isopropylmalate. The protein operates within amino-acid biosynthesis; L-leucine biosynthesis; L-leucine from 3-methyl-2-oxobutanoate: step 2/4. In terms of biological role, catalyzes the isomerization between 2-isopropylmalate and 3-isopropylmalate, via the formation of 2-isopropylmaleate. The sequence is that of 3-isopropylmalate dehydratase small subunit from Shewanella woodyi (strain ATCC 51908 / MS32).